Consider the following 53-residue polypeptide: Sec-independent protein translocase protein TatA (53 aa).

The chain crosses the membrane as a helical span at residues 1 to 21; the sequence is MGMSFSHLLIVLLIIFVLFGA.

This sequence belongs to the TatA/E family. As to quaternary structure, the Tat system comprises two distinct complexes: a TatABC complex, containing multiple copies of TatA, TatB and TatC subunits, and a separate TatA complex, containing only TatA subunits. Substrates initially bind to the TatABC complex, which probably triggers association of the separate TatA complex to form the active translocon.

Its subcellular location is the cell inner membrane. In terms of biological role, part of the twin-arginine translocation (Tat) system that transports large folded proteins containing a characteristic twin-arginine motif in their signal peptide across membranes. TatA could form the protein-conducting channel of the Tat system. The polypeptide is Sec-independent protein translocase protein TatA (Rickettsia typhi (strain ATCC VR-144 / Wilmington)).